The primary structure comprises 107 residues: Thioredoxin (107 aa).

In terms of domain architecture, Thioredoxin spans proline 2–leucine 107. Residues cysteine 32 and cysteine 35 each act as nucleophile in the active site. A disulfide bridge connects residues cysteine 32 and cysteine 35.

It belongs to the thioredoxin family.

The protein localises to the plastid. It localises to the chloroplast. Its function is as follows. Participates in various redox reactions through the reversible oxidation of its active center dithiol to a disulfide and catalyzes dithiol-disulfide exchange reactions. This is Thioredoxin (trxA) from Cyanidium caldarium (Red alga).